The following is a 159-amino-acid chain: Ribosomal RNA large subunit methyltransferase H (159 aa).

S-adenosyl-L-methionine-binding positions include leucine 76, glycine 108, and 127 to 132 (FSPMTF).

Belongs to the RNA methyltransferase RlmH family. As to quaternary structure, homodimer.

It localises to the cytoplasm. The enzyme catalyses pseudouridine(1915) in 23S rRNA + S-adenosyl-L-methionine = N(3)-methylpseudouridine(1915) in 23S rRNA + S-adenosyl-L-homocysteine + H(+). Functionally, specifically methylates the pseudouridine at position 1915 (m3Psi1915) in 23S rRNA. This chain is Ribosomal RNA large subunit methyltransferase H, found in Alkaliphilus metalliredigens (strain QYMF).